The chain runs to 296 residues: Cobalamin trafficking protein CblD (296 aa).

Residues 1–38 (MAHVLCNRARLVSYLPGFCSLVKRVINPRAFSTAGSSG) constitute a mitochondrion transit peptide. The residue at position 203 (Lys-203) is an N6-acetyllysine.

As to quaternary structure, heterodimer with MMACHC. Forms a multiprotein complex with MMACHC, MTR and MTRR.

Its subcellular location is the cytoplasm. It is found in the mitochondrion. Involved in cobalamin metabolism and trafficking. Plays a role in regulating the biosynthesis and the proportion of two coenzymes, methylcob(III)alamin (MeCbl) and 5'-deoxyadenosylcobalamin (AdoCbl). Promotes oxidation of cob(II)alamin bound to MMACHC. The processing of cobalamin in the cytosol occurs in a multiprotein complex composed of at least MMACHC, MMADHC, MTRR (methionine synthase reductase) and MTR (methionine synthase) which may contribute to shuttle safely and efficiently cobalamin towards MTR in order to produce methionine. The polypeptide is Cobalamin trafficking protein CblD (Mmadhc) (Rattus norvegicus (Rat)).